Reading from the N-terminus, the 155-residue chain is Endoribonuclease YbeY (155 aa).

Residues H120, H124, and H130 each coordinate Zn(2+).

Belongs to the endoribonuclease YbeY family. Zn(2+) serves as cofactor.

The protein localises to the cytoplasm. In terms of biological role, single strand-specific metallo-endoribonuclease involved in late-stage 70S ribosome quality control and in maturation of the 3' terminus of the 16S rRNA. In Alkaliphilus metalliredigens (strain QYMF), this protein is Endoribonuclease YbeY.